A 187-amino-acid polypeptide reads, in one-letter code: Peptidyl-tRNA hydrolase (187 aa).

Residue tyrosine 16 coordinates tRNA. Catalysis depends on histidine 21, which acts as the Proton acceptor. Residues tyrosine 66, asparagine 68, and asparagine 114 each coordinate tRNA.

Belongs to the PTH family. Monomer.

The protein localises to the cytoplasm. It catalyses the reaction an N-acyl-L-alpha-aminoacyl-tRNA + H2O = an N-acyl-L-amino acid + a tRNA + H(+). Functionally, hydrolyzes ribosome-free peptidyl-tRNAs (with 1 or more amino acids incorporated), which drop off the ribosome during protein synthesis, or as a result of ribosome stalling. Catalyzes the release of premature peptidyl moieties from peptidyl-tRNA molecules trapped in stalled 50S ribosomal subunits, and thus maintains levels of free tRNAs and 50S ribosomes. This chain is Peptidyl-tRNA hydrolase, found in Malacoplasma penetrans (strain HF-2) (Mycoplasma penetrans).